The chain runs to 884 residues: Alanine--tRNA ligase (884 aa).

Positions 568, 572, 670, and 674 each coordinate Zn(2+).

This sequence belongs to the class-II aminoacyl-tRNA synthetase family. Requires Zn(2+) as cofactor.

It is found in the cytoplasm. The catalysed reaction is tRNA(Ala) + L-alanine + ATP = L-alanyl-tRNA(Ala) + AMP + diphosphate. Its function is as follows. Catalyzes the attachment of alanine to tRNA(Ala) in a two-step reaction: alanine is first activated by ATP to form Ala-AMP and then transferred to the acceptor end of tRNA(Ala). Also edits incorrectly charged Ser-tRNA(Ala) and Gly-tRNA(Ala) via its editing domain. This chain is Alanine--tRNA ligase, found in Synechococcus sp. (strain JA-2-3B'a(2-13)) (Cyanobacteria bacterium Yellowstone B-Prime).